We begin with the raw amino-acid sequence, 457 residues long: Proline-specific permease ProY (457 aa).

Residues Met1–Arg17 are Cytoplasmic-facing. 2 helical membrane-spanning segments follow: residues Phe18–Lys38 and Met39–Met59. Topologically, residues Arg60–Gly84 are cytoplasmic. Residues Pro85–Ala105 form a helical membrane-spanning segment. Residues Asp106–Tyr113 are Periplasmic-facing. The chain crosses the membrane as a helical span at residues Met114 to Ile134. Topologically, residues Cys135–Lys156 are cytoplasmic. A helical membrane pass occupies residues Val157–Asn177. At Gly178–Gly197 the chain is on the periplasmic side. Residues Trp198–Ile218 form a helical membrane-spanning segment. Residues Gly219–Arg242 are Cytoplasmic-facing. The chain crosses the membrane as a helical span at residues Ile243–Val263. The Periplasmic portion of the chain corresponds to Gly264–Met277. Residues Gly278–Ile298 traverse the membrane as a helical segment. The Cytoplasmic portion of the chain corresponds to Asn299–Pro331. Residues Trp332 to Met352 traverse the membrane as a helical segment. Over Pro353–Asn355 the chain is Periplasmic. Residues Val356–Leu376 traverse the membrane as a helical segment. The Cytoplasmic portion of the chain corresponds to Leu377–Pro399. The helical transmembrane segment at Gly400–Gly420 threads the bilayer. The Periplasmic portion of the chain corresponds to Tyr421–Asp424. The chain crosses the membrane as a helical span at residues Thr425 to Phe445. Over Lys446–Gln457 the chain is Cytoplasmic.

This sequence belongs to the amino acid-polyamine-organocation (APC) superfamily. Amino acid transporter (AAT) (TC 2.A.3.1) family.

The protein localises to the cell inner membrane. Functionally, permease that is involved in the transport across the cytoplasmic membrane of proline. This Escherichia coli O157:H7 protein is Proline-specific permease ProY (proY).